The chain runs to 1116 residues: Disease resistance protein RGA5 (1116 aa).

A structured coiled coil (CC) domain region spans residues 1–177 (MDAPASFSLG…HHGVSANLVG (177 aa)). The NB-ARC domain maps to 182–466 (KTKLNRWLSD…WSAEGFVSAN (285 aa)). LRR repeat units follow at residues 608–631 (LFQL…ISGL), 633–653 (YLET…LVHL), 654–675 (PNLL…GCMR), 677–701 (LRTL…ELTN), 732–755 (LSNL…DISS), 786–808 (LHKL…DNLT), 810–830 (LPSL…RFIF), 835–857 (LPVL…AGAM), and 858–882 (PNLQ…LFGI). The segment at 935–971 (EEESHPLEKQHHKREKGSSAGHGVLEKESVEDSEKNT) is disordered. A compositionally biased stretch (basic and acidic residues) spans 958–971 (VLEKESVEDSEKNT). Residues 997–1066 (RTKIVVKVHM…KCGLAELLMV (70 aa)) form the HMA domain. The interval 1000-1070 (IVVKVHMPCG…AELLMVELVE (71 aa)) is HMA-like domain.

The protein belongs to the disease resistance NB-LRR family. As to quaternary structure, forms homodimer or heterodimer with RGA4 through its coiled coil (CC) domain. Interacts with AVR1-Pia and AVR-CO39 through its C-terminal part containing the HMA-like domain. In terms of tissue distribution, expressed in leaves.

The protein localises to the cytoplasm. Its function is as follows. Disease resistance (R) protein that recognizes the AVR-Pia and AVR1-CO39 effector avirulence proteins from M.oryzae. Resistance proteins guard the plant against pathogens that contain an appropriate avirulence protein via an indirect interaction with this avirulence protein. That triggers a defense system including the hypersensitive response, which restricts the pathogen growth. Contribution of RGA4 is required to recognize the effector avirulence proteins AVR-Pia and AVR1-CO39 from M.oryzae. Acts as a repressor of the RGA4-mediated cell death activation. Upon infection, recognition and binding of the AVR effectors relieve the RGA5-mediated repression and triggers the hypersensitive response. Immune response triggered by the RGA4-RGA5 -mediated recognition of AVR1-CO39 confers resistance to X.oryzae pathovars. This is Disease resistance protein RGA5 from Oryza sativa subsp. japonica (Rice).